We begin with the raw amino-acid sequence, 863 residues long: ATP-dependent helicase Lhr-Core protein 2 (863 aa).

ATP is bound by residues Phe30, Gln37, Lys60, Thr61, Asp179, Glu180, Arg377, and His380. The Helicase ATP-binding domain occupies 41–234 (VIEIHKGENV…FVFGFNDDGT (194 aa)). A DEAH box motif is present at residues 179 to 182 (DEVH). The Helicase C-terminal domain occupies 275–424 (RLDELIEQHR…RIKIPQNPLD (150 aa)). The tract at residues 418-512 (IPQNPLDVLV…AIYYMNTGTI (95 aa)) is WH domain. Residues 513–863 (PDEAKIEVYT…KIMAMIGELE (351 aa)) form a domain 4 region.

It belongs to the Lhr helicase family. Lhr-Core subfamily. In terms of assembly, monomer.

It carries out the reaction ATP + H2O = ADP + phosphate + H(+). With respect to regulation, unwinding of dsRNA duplexes is inhibited by AMP-PMP and ATP-gamma-S. In terms of biological role, a DNA:RNA helicase with a significant strand annealing activity, probably involved in DNA repair and RNA transactions. In vitro has a slow helicase activity with a preference for 3'-overhang duplexes; displaces RNA from 3'-overhang DNA:RNA or RNA:RNA duplexes. 3'-tailed double-stranded (ds)DNA is not unwound. The slow helicase activity on RNA duplexes is ATP-independent. Has strand annealing properties in the absence of ATP; forms 3'-overhang DNA:RNA, 3'-overhang dsRNA and 3'-overhang dsDNA duplexes but not 5'-overhang duplexes. A nucleic acid-dependent ATPase; single-stranded (ss)DNA and RNA are equally stimulatory. Binds ssDNA, RNA, dsDNA and dsRNA duplexes. In Thermococcus barophilus (strain DSM 11836 / MP), this protein is ATP-dependent helicase Lhr-Core protein 2.